The chain runs to 374 residues: tRNA-specific 2-thiouridylase MnmA (374 aa).

ATP-binding positions include 17–24 and M43; that span reads GMSGGVDS. Residues 103–105 form an interaction with target base in tRNA region; it reads NPD. Catalysis depends on C108, which acts as the Nucleophile. C108 and C204 are joined by a disulfide. G132 contributes to the ATP binding site. The tract at residues 154–156 is interaction with tRNA; that stretch reads KDQ. C204 acts as the Cysteine persulfide intermediate in catalysis. The interval 316–317 is interaction with tRNA; it reads RY.

The protein belongs to the MnmA/TRMU family.

The protein resides in the cytoplasm. It catalyses the reaction S-sulfanyl-L-cysteinyl-[protein] + uridine(34) in tRNA + AH2 + ATP = 2-thiouridine(34) in tRNA + L-cysteinyl-[protein] + A + AMP + diphosphate + H(+). Catalyzes the 2-thiolation of uridine at the wobble position (U34) of tRNA, leading to the formation of s(2)U34. The sequence is that of tRNA-specific 2-thiouridylase MnmA from Pseudomonas putida (strain GB-1).